Here is a 200-residue protein sequence, read N- to C-terminus: WUSCHEL-related homeobox 9 (200 aa).

The homeobox; WUS-type DNA-binding region spans V10 to H74. Over residues E70–G80 the composition is skewed to basic residues. Residues E70–Y118 are disordered. Residues D91–D101 show a composition bias toward basic and acidic residues.

It belongs to the WUS homeobox family. In terms of tissue distribution, specifically expressed in the central cells of the quiescent center (QC) of the root.

The protein resides in the nucleus. Functionally, transcription factor which may be involved in the specification and maintenance of the stem cells (QC cells) in the root apical meristem (RAM). In Oryza sativa subsp. japonica (Rice), this protein is WUSCHEL-related homeobox 9 (WOX9).